A 290-amino-acid polypeptide reads, in one-letter code: uncharacterized protein (290 aa).

Its subcellular location is the cell membrane. The protein localises to the membrane raft. This is an uncharacterized protein from Bacillus subtilis (strain 168).